Consider the following 418-residue polypeptide: Serine hydroxymethyltransferase (418 aa).

(6S)-5,6,7,8-tetrahydrofolate contacts are provided by residues Leu121 and 125–127 (GHL). At Lys230 the chain carries N6-(pyridoxal phosphate)lysine. Residue 355–357 (SPF) participates in (6S)-5,6,7,8-tetrahydrofolate binding.

It belongs to the SHMT family. In terms of assembly, homodimer. Pyridoxal 5'-phosphate serves as cofactor.

Its subcellular location is the cytoplasm. The catalysed reaction is (6R)-5,10-methylene-5,6,7,8-tetrahydrofolate + glycine + H2O = (6S)-5,6,7,8-tetrahydrofolate + L-serine. It functions in the pathway one-carbon metabolism; tetrahydrofolate interconversion. It participates in amino-acid biosynthesis; glycine biosynthesis; glycine from L-serine: step 1/1. Functionally, catalyzes the reversible interconversion of serine and glycine with tetrahydrofolate (THF) serving as the one-carbon carrier. This reaction serves as the major source of one-carbon groups required for the biosynthesis of purines, thymidylate, methionine, and other important biomolecules. Also exhibits THF-independent aldolase activity toward beta-hydroxyamino acids, producing glycine and aldehydes, via a retro-aldol mechanism. This Alcanivorax borkumensis (strain ATCC 700651 / DSM 11573 / NCIMB 13689 / SK2) protein is Serine hydroxymethyltransferase.